The primary structure comprises 237 residues: Trypsin-1 (237 aa).

In terms of domain architecture, Peptidase S1 spans 1–237; sequence IVGGTDAVLG…HVDWIKANAV (237 aa). Cys30 and Cys46 form a disulfide bridge. His45 acts as the Charge relay system in catalysis. The Ca(2+) site is built by Glu64, Val69, and Glu74. The active-site Charge relay system is the Asp96. 2 cysteine pairs are disulfide-bonded: Cys159-Cys174 and Cys185-Cys213. The active-site Charge relay system is the Ser189.

This sequence belongs to the peptidase S1 family. Ca(2+) is required as a cofactor.

The protein localises to the secreted. The protein resides in the extracellular space. It carries out the reaction Preferential cleavage: Arg-|-Xaa, Lys-|-Xaa.. This Astacus astacus (Noble crayfish) protein is Trypsin-1.